A 326-amino-acid chain; its full sequence is Chain length determinant protein (326 aa).

Residues 1 to 31 are Cytoplasmic-facing; that stretch reads MRVENNNVSGQNHDPEQIDLIDLLVQLWRGK. A helical transmembrane segment spans residues 32-52; it reads MTIIISVIVAIALAIGYLAVA. Residues 53 to 295 are Periplasmic-facing; that stretch reads KEKWTSTAII…LPIRRDSPKK (243 aa). The chain crosses the membrane as a helical span at residues 296 to 316; the sequence is AITLILAVLLGGMVGAGIVLG. The Cytoplasmic portion of the chain corresponds to 317–326; the sequence is RNALRNYNAK.

It belongs to the WzzB/Cld/Rol family. As to quaternary structure, homodimer.

The protein resides in the cell inner membrane. The protein operates within bacterial outer membrane biogenesis; lipopolysaccharide biosynthesis. In terms of biological role, confers a modal distribution of chain length on the O-antigen component of lipopolysaccharide (LPS). Gives rise to a reduced number of short chain molecules and increases in numbers of longer molecules. The sequence is that of Chain length determinant protein (wzzB) from Escherichia coli (strain K12).